Consider the following 294-residue polypeptide: Cytidine deaminase (294 aa).

CMP/dCMP-type deaminase domains follow at residues 48–168 (DEDA…FGPK) and 186–294 (LTGD…VLLG). Residue 89-91 (NME) coordinates substrate. Histidine 102 provides a ligand contact to Zn(2+). Catalysis depends on glutamate 104, which acts as the Proton donor. Zn(2+)-binding residues include cysteine 129 and cysteine 132.

This sequence belongs to the cytidine and deoxycytidylate deaminase family. Homodimer. The cofactor is Zn(2+).

The enzyme catalyses cytidine + H2O + H(+) = uridine + NH4(+). It catalyses the reaction 2'-deoxycytidine + H2O + H(+) = 2'-deoxyuridine + NH4(+). Functionally, this enzyme scavenges exogenous and endogenous cytidine and 2'-deoxycytidine for UMP synthesis. The protein is Cytidine deaminase of Salmonella agona (strain SL483).